The following is a 646-amino-acid chain: Galactofuranosyltransferase GlfT2 (646 aa).

4 residues coordinate UDP-alpha-D-galactofuranose: Arg-182, Gln-211, Asn-240, and Asp-267. Mn(2+) is bound by residues Asp-267 and Asp-269. The active-site Proton acceptor is the Asp-384. His-408 contacts Mn(2+).

The protein belongs to the glycosyltransferase 2 family. Homotetramer. The cofactor is Mn(2+). Requires Mg(2+) as cofactor.

It localises to the cell membrane. It carries out the reaction beta-D-galactofuranosyl-(1-&gt;5)-beta-D-galactofuranosyl-(1-&gt;4)-alpha-L-rhamnosyl-(1-&gt;3)-N-acetyl-alpha-D-glucosaminyl-diphospho-trans,octa-cis-decaprenol + 28 UDP-alpha-D-galactofuranose = [beta-D-galactofuranosyl-(1-&gt;5)-beta-D-galactofuranosyl-(1-&gt;6)]14-beta-D-galactofuranosyl-(1-&gt;5)-beta-D-galactofuranosyl-(1-&gt;4)-alpha-L-rhamnopyranosyl-(1-&gt;3)-N-acetyl-alpha-D-glucosaminyl-diphospho-trans,octa-cis-decaprenol + 28 UDP + 28 H(+). It participates in cell wall biogenesis; cell wall polysaccharide biosynthesis. Involved in the galactan polymerization of the arabinogalactan (AG) region of the mycolylarabinogalactan-peptidoglycan (mAGP) complex, an essential component of the mycobacteria cell wall. Thus, successively transfers approximately 28 galactofuranosyl (Galf) residues from UDP-galactofuranose (UDP-Galf) onto the galactofuranosyl-galactofuranosyl-rhamnosyl-GlcNAc-diphospho-decaprenol (Galf-Galf-Rha-GlcNAc-PP-C50) acceptor produced by GlfT1, with alternating 1-&gt;5 and 1-&gt;6 links, forming a galactan domain with approximately 30 galactofuranosyl residues. This chain is Galactofuranosyltransferase GlfT2, found in Mycolicibacterium smegmatis (strain ATCC 700084 / mc(2)155) (Mycobacterium smegmatis).